The chain runs to 611 residues: Urease subunit alpha 2 (611 aa).

Positions 154–611 constitute a Urease domain; that stretch reads GGIDSHIHFI…LPMAQRYFLF (458 aa). Residues His-159, His-161, and Lys-242 each contribute to the Ni(2+) site. Lys-242 carries the post-translational modification N6-carboxylysine. Residue His-244 participates in substrate binding. Ni(2+)-binding residues include His-271 and His-297. His-345 (proton donor) is an active-site residue. Asp-385 lines the Ni(2+) pocket. The tract at residues 411–434 is disordered; it reads GHLAPDQSAKTEQSLDNIMLSPTD. Residues 418–434 show a composition bias toward polar residues; that stretch reads SAKTEQSLDNIMLSPTD.

The protein belongs to the metallo-dependent hydrolases superfamily. Urease alpha subunit family. In terms of assembly, heterotrimer of UreA (gamma), UreB (beta) and UreC (alpha) subunits. Three heterotrimers associate to form the active enzyme. Ni cation is required as a cofactor. Carboxylation allows a single lysine to coordinate two nickel ions.

The protein localises to the cytoplasm. The catalysed reaction is urea + 2 H2O + H(+) = hydrogencarbonate + 2 NH4(+). The protein operates within nitrogen metabolism; urea degradation; CO(2) and NH(3) from urea (urease route): step 1/1. The polypeptide is Urease subunit alpha 2 (Psychrobacter cryohalolentis (strain ATCC BAA-1226 / DSM 17306 / VKM B-2378 / K5)).